We begin with the raw amino-acid sequence, 150 residues long: Small ribosomal subunit protein uS13 (150 aa).

It belongs to the universal ribosomal protein uS13 family. In terms of assembly, part of the 30S ribosomal subunit. Forms a loose heterodimer with protein S19. Forms two bridges to the 50S subunit in the 70S ribosome.

Its function is as follows. Located at the top of the head of the 30S subunit, it contacts several helices of the 16S rRNA. In the 70S ribosome it contacts the 23S rRNA (bridge B1a) and protein L5 of the 50S subunit (bridge B1b), connecting the 2 subunits; these bridges are implicated in subunit movement. In Methanocorpusculum labreanum (strain ATCC 43576 / DSM 4855 / Z), this protein is Small ribosomal subunit protein uS13.